Reading from the N-terminus, the 369-residue chain is UPF0284 protein cce_1085 (369 aa).

This sequence belongs to the UPF0284 family.

The protein is UPF0284 protein cce_1085 of Crocosphaera subtropica (strain ATCC 51142 / BH68) (Cyanothece sp. (strain ATCC 51142)).